The following is a 608-amino-acid chain: Cytoplasmic dynein 1 intermediate chain 1 (608 aa).

Basic and acidic residues-rich tracts occupy residues 1–13 (MSDK…ELER) and 20–60 (QIRE…RETE). A disordered region spans residues 1 to 106 (MSDKSDLKAE…SGDLGPLTRR (106 aa)). An N-acetylserine modification is found at serine 2. Serine 50 carries the post-translational modification Phosphoserine. The span at 70-79 (PEPPLVPTPM) shows a compositional bias: pro residues. The span at 80–90 (SPSSKSVSTPS) shows a compositional bias: low complexity. At serine 83 the chain carries Phosphoserine. Position 88 is a phosphothreonine (threonine 88). Residues serine 90, serine 94, and serine 97 each carry the phosphoserine modification. The tract at residues 110-126 (KLGVSKITQVDFLPREV) is interaction with DYNLT1. The tract at residues 132–184 (ETQTPLATHQSEEDEDDEEMVEPKGDQDSEQENEDKKQEVKEAPPRELTEEEK) is disordered. The residue at position 139 (threonine 139) is a Phosphothreonine. A phosphoserine mark is found at serine 142 and serine 160. A compositionally biased stretch (basic and acidic residues) spans 165-184 (EDKKQEVKEAPPRELTEEEK). WD repeat units follow at residues 248–297 (SKHR…TTPE), 301–341 (HCQS…RTPV), 350–391 (AHTH…TPQE), 400–440 (SKPV…AGIG), 445–490 (GHQG…PLYS), 493–533 (DNAD…EVPT), and 539–578 (EGAS…VPHN). Position 598 is a phosphoserine (serine 598).

Belongs to the dynein intermediate chain family. Homodimer. The cytoplasmic dynein 1 complex consists of two catalytic heavy chains (HCs) and a number of non-catalytic subunits presented by intermediate chains (ICs), light intermediate chains (LICs) and light chains (LCs); the composition seems to vary in respect to the IC, LIC and LC composition. The heavy chain homodimer serves as a scaffold for the probable homodimeric assembly of the respective non-catalytic subunits. The ICs and LICs bind directly to the HC dimer and the LCs assemble on the IC dimer. Interacts with DYNC1H1. Interacts with DYNLT1 and DYNLT3. Interacts with DCTN1. Interacts with MCRS1; the interaction is required for the proper distribution of centriolar satellites.

The protein resides in the cytoplasm. It is found in the chromosome. The protein localises to the centromere. It localises to the kinetochore. Its subcellular location is the cytoskeleton. The protein resides in the spindle pole. Its function is as follows. Acts as one of several non-catalytic accessory components of the cytoplasmic dynein 1 complex that are thought to be involved in linking dynein to cargos and to adapter proteins that regulate dynein function. Cytoplasmic dynein 1 acts as a motor for the intracellular retrograde motility of vesicles and organelles along microtubules. The intermediate chains mediate the binding of dynein to dynactin via its 150 kDa component (p150-glued) DCTN1. May play a role in mediating the interaction of cytoplasmic dynein with membranous organelles and kinetochores. This chain is Cytoplasmic dynein 1 intermediate chain 1 (DYNC1I1), found in Bos taurus (Bovine).